A 111-amino-acid chain; its full sequence is Dormancy-associated protein 1 (111 aa).

The segment at 30-60 (KDDGASNQLMRSTSIPTTPTTPVTPTTPSSA) is disordered. Over residues 41–59 (STSIPTTPTTPVTPTTPSS) the composition is skewed to low complexity.

This sequence belongs to the DRM1/ARP family. Expressed in axilary buds and in non-growing stems and roots. Detected in sepals, stamens and carpels, but barely detected in petals or leaflets.

The chain is Dormancy-associated protein 1 from Pisum sativum (Garden pea).